The primary structure comprises 78 residues: Small integral membrane protein 1 (78 aa).

Position 1 is an N-acetylmethionine (Met-1). Positions 1–18 (MQPQESHVHYSRWEDGSR) are enriched in basic and acidic residues. The interval 1–20 (MQPQESHVHYSRWEDGSRDG) is disordered. Topologically, residues 1–46 (MQPQESHVHYSRWEDGSRDGVSLGAVSSTEEASRCRRISQRLCTGK) are cytoplasmic. Residues Ser-6, Ser-17, Ser-22, and Ser-27 each carry the phosphoserine modification. Residues 47–67 (LGIAMKVLGGVALFWIIFILG) traverse the membrane as a helical; Signal-anchor for type II membrane protein segment. At 68–78 (YLTGYYVHKCK) the chain is on the extracellular side. The tract at residues 68-78 (YLTGYYVHKCK) is displays the Vel antigen.

The protein belongs to the SMIM1 family. In terms of assembly, homooligomer; disulfide-linked. Highly expressed in the bone marrow and expressed at lower levels in non-hematopoietic tissues. Highly expressed in erythroleukemia cell lines. Up-regulated in CD34+ hematopoietic progenitors cultured toward red blood cells.

The protein resides in the cell membrane. Its function is as follows. Regulator of red blood cell formation. This chain is Small integral membrane protein 1, found in Homo sapiens (Human).